The following is a 354-amino-acid chain: Protein OPG055 (354 aa).

The protein belongs to the orthopoxvirus OPG055 family.

Functionally, stimulates increases in peripheral microtubule dynamics and may increase the motility of the infected cells, contributing to cell-to-cell spread of the virus. Seems to inhibit the signaling via the GTPase RHOA and DIAPH1/mDia. In Cynomys gunnisoni (Gunnison's prairie dog), this protein is Protein OPG055 (OPG055).